The primary structure comprises 1020 residues: Contactin-1 (1020 aa).

A signal peptide spans 1-20 (MKMPLLVSHLLLISLTSCLG). 6 Ig-like C2-type domains span residues 41–131 (PIFE…ATLS), 137–223 (PFPP…KSVF), 241–326 (PADI…ARIY), 331–407 (PEWV…AELK), 413–500 (PTFE…GTLV), and 504–603 (PTRI…LVVR). Disulfide bonds link cysteine 65–cysteine 114 and cysteine 158–cysteine 211. N-linked (GlcNAc...) asparagine glycans are attached at residues asparagine 208 and asparagine 258. An intrachain disulfide couples cysteine 263 to cysteine 310. Asparagine 338 is a glycosylation site (N-linked (GlcNAc...) asparagine). 2 disulfides stabilise this stretch: cysteine 352-cysteine 391 and cysteine 436-cysteine 484. N-linked (GlcNAc...) asparagine glycans are attached at residues asparagine 457, asparagine 473, asparagine 494, and asparagine 521. An intrachain disulfide couples cysteine 526 to cysteine 585. N-linked (GlcNAc...) asparagine glycosylation occurs at asparagine 593. 4 consecutive Fibronectin type-III domains span residues 608–706 (PPGG…TDGA), 711–808 (APSD…SAQD), 813–908 (APTE…APPS), and 909–1002 (QPPR…TLSS). Residues 695–719 (SIPSNRIKTDGAAPNVAPSDVGGGG) form a disordered region. The N-linked (GlcNAc...) asparagine glycan is linked to asparagine 935. Serine 1001 carries GPI-anchor amidated serine lipidation. The propeptide at 1002 to 1020 (SSLLSLLLPSLGFLVYSEF) is removed in mature form.

Belongs to the immunoglobulin superfamily. Contactin family. Monomer. Interacts with CNTNAP1 in cis form. Binds to the carbonic-anhydrase like domain of PTPRZ1. Interacts with NOTCH1 and TNR. Detected in a complex with NRCAM and PTPRB. Interacts with TASOR. In terms of tissue distribution, expressed in the ovary and in Sertoli cells of the testis.

Its subcellular location is the cell membrane. In terms of biological role, contactins mediate cell surface interactions during nervous system development. Involved in the formation of paranodal axo-glial junctions in myelinated peripheral nerves and in the signaling between axons and myelinating glial cells via its association with CNTNAP1. Participates in oligodendrocytes generation by acting as a ligand of NOTCH1. Its association with NOTCH1 promotes NOTCH1 activation through the released notch intracellular domain (NICD) and subsequent translocation to the nucleus. Interaction with TNR induces a repulsion of neurons and an inhibition of neurite outgrowth. The polypeptide is Contactin-1 (Cntn1) (Mus musculus (Mouse)).